A 313-amino-acid polypeptide reads, in one-letter code: MLKMESTQQMVSSIINTSFEAAVVAATSTLELMGIQYDYNEVFTRVKSKFDYVMDDSGVKNNLLGKAITIAQALNGKFGSAIRNRNWMSDSKTVAKLDEDVNKLRMTLSSKGIDQKMRVLNACFSVKRIPGKSSSIIKCTRLMKDKIERGEVEVDDSYVDEKMEIDTIDWKSRYDQLEKRFESLKQRVNEKYNTWVQKAKKVNENMYSLQNVISQQQNQIADLQQYCNKLEADLQGKFSSLVSSVEWYLRSMELPDDVKTDIEQQLNSIDLINPINAIDDIESLIRNLIQDYDRTFLMLKGLLKQCNYEYAYE.

The segment at 1 to 149 is RNA-binding; that stretch reads MLKMESTQQM…TRLMKDKIER (149 aa). The interval 150–206 is dimerization; sequence GEVEVDDSYVDEKMEIDTIDWKSRYDQLEKRFESLKQRVNEKYNTWVQKAKKVNENM. A coiled-coil region spans residues 166-237; that stretch reads DTIDWKSRYD…NKLEADLQGK (72 aa). An interaction with host ZC3H7B region spans residues 170 to 234; the sequence is WKSRYDQLEK…QYCNKLEADL (65 aa). Positions 208–313 are interaction with host EIF4G1; that stretch reads SLQNVISQQQ…KQCNYEYAYE (106 aa).

It belongs to the rotavirus NSP3 family. As to quaternary structure, homodimer. Interacts (via the coiled-coil region) with host ZC3H7B (via LD motif). Interacts with host EIF4G1.

The protein localises to the host cytoplasm. Its function is as follows. Plays an important role in stimulating the translation of viral mRNAs. These mRNAs are capped but not polyadenylated, instead terminating in a conserved sequence 'GACC' at the 3' that is recognized by NSP3, which competes with host PABPC1 for EIF4G1 binding. The interaction between NSP3 and host EIF4G1 stabilizes the EIF4E-EIF4G1 interaction, thereby facilitating the initiation of capped mRNA translation. The protein is Non-structural protein 3 of Rotavirus A (strain RVA/Human/United Kingdom/ST3/1975/G4P2A[6]) (RV-A).